Here is a 468-residue protein sequence, read N- to C-terminus: tRNA modification GTPase MnmE (468 aa).

(6S)-5-formyl-5,6,7,8-tetrahydrofolate is bound by residues Arg29, Glu97, and Lys136. Positions 232 to 390 constitute a TrmE-type G domain; that stretch reads GFELAIVGRP…VVAHIVARME (159 aa). Asn242 serves as a coordination point for K(+). Residues 242 to 247, 261 to 267, and 286 to 289 contribute to the GTP site; these read NVGKSS, TDLAGTT, and DTAG. Ser246 contributes to the Mg(2+) binding site. The K(+) site is built by Thr261, Leu263, and Thr266. Thr267 is a Mg(2+) binding site. Lys468 is a (6S)-5-formyl-5,6,7,8-tetrahydrofolate binding site.

Belongs to the TRAFAC class TrmE-Era-EngA-EngB-Septin-like GTPase superfamily. TrmE GTPase family. In terms of assembly, homodimer. Heterotetramer of two MnmE and two MnmG subunits. Requires K(+) as cofactor.

It localises to the cytoplasm. Its function is as follows. Exhibits a very high intrinsic GTPase hydrolysis rate. Involved in the addition of a carboxymethylaminomethyl (cmnm) group at the wobble position (U34) of certain tRNAs, forming tRNA-cmnm(5)s(2)U34. This is tRNA modification GTPase MnmE from Magnetococcus marinus (strain ATCC BAA-1437 / JCM 17883 / MC-1).